Here is a 235-residue protein sequence, read N- to C-terminus: Meiotically up-regulated gene 123 protein (235 aa).

Basic and acidic residues predominate over residues 1 to 14 (MERLATRSSHDDPY). Disordered regions lie at residues 1–34 (MERLATRSSHDDPYSRSSLPTSNAINSNHESNGS), 58–83 (PLHSSPSIKSSSQNGKSSSKGLGGMR), and 169–235 (SRAD…FDSD). Polar residues predominate over residues 15 to 34 (SRSSLPTSNAINSNHESNGS). Low complexity predominate over residues 61–77 (SSPSIKSSSQNGKSSSK). Residues 176–202 (ETTQSDGFESRSGSPTHDIQSYLVNRR) show a composition bias toward polar residues. 3 positions are modified to phosphoserine: Ser180, Ser187, and Ser189. Phosphothreonine is present on Thr191.

The protein resides in the cytoplasm. Its subcellular location is the nucleus. Functionally, involved in sporulation and has a role in meiosis. The sequence is that of Meiotically up-regulated gene 123 protein (mug123) from Schizosaccharomyces pombe (strain 972 / ATCC 24843) (Fission yeast).